Reading from the N-terminus, the 80-residue chain is Cell division protein ZapB (80 aa).

A coiled-coil region spans residues 3 to 80 (FEVFEKLEAK…ALLGKMEDVQ (78 aa)).

Belongs to the ZapB family. In terms of assembly, homodimer. The ends of the coiled-coil dimer bind to each other, forming polymers. Interacts with FtsZ.

The protein localises to the cytoplasm. Its function is as follows. Non-essential, abundant cell division factor that is required for proper Z-ring formation. It is recruited early to the divisome by direct interaction with FtsZ, stimulating Z-ring assembly and thereby promoting cell division earlier in the cell cycle. Its recruitment to the Z-ring requires functional FtsA or ZipA. The protein is Cell division protein ZapB of Photorhabdus laumondii subsp. laumondii (strain DSM 15139 / CIP 105565 / TT01) (Photorhabdus luminescens subsp. laumondii).